The chain runs to 227 residues: Enolase-phosphatase E1 (227 aa).

It belongs to the HAD-like hydrolase superfamily. MasA/MtnC family. Monomer. Mg(2+) is required as a cofactor.

It carries out the reaction 5-methylsulfanyl-2,3-dioxopentyl phosphate + H2O = 1,2-dihydroxy-5-(methylsulfanyl)pent-1-en-3-one + phosphate. Its pathway is amino-acid biosynthesis; L-methionine biosynthesis via salvage pathway; L-methionine from S-methyl-5-thio-alpha-D-ribose 1-phosphate: step 3/6. The protein operates within amino-acid biosynthesis; L-methionine biosynthesis via salvage pathway; L-methionine from S-methyl-5-thio-alpha-D-ribose 1-phosphate: step 4/6. Bifunctional enzyme that catalyzes the enolization of 2,3-diketo-5-methylthiopentyl-1-phosphate (DK-MTP-1-P) into the intermediate 2-hydroxy-3-keto-5-methylthiopentenyl-1-phosphate (HK-MTPenyl-1-P), which is then dephosphorylated to form the acireductone 1,2-dihydroxy-3-keto-5-methylthiopentene (DHK-MTPene). The protein is Enolase-phosphatase E1 of Persephonella marina (strain DSM 14350 / EX-H1).